Consider the following 227-residue polypeptide: Ras-related protein Rab-3C (227 aa).

Positions 39, 42, 43, 44, 45, 56, 57, 61, and 62 each coordinate GTP. Thr44 lines the Mg(2+) pocket. The short motif at 53–66 is the Switch 1 element; sequence DSFTSAFVSTVGID. Mg(2+) contacts are provided by Thr62 and Asp85. At Thr86 the chain carries Phosphothreonine. A Switch 2 motif is present at residues 86 to 104; it reads TAGQERYRTITTAYYRGAM. Residues Gly88, Asn143, Lys144, Asp146, Ala174, and Lys175 each coordinate GTP. 2 positions are modified to phosphoserine: Ser196 and Ser198. Thr206 carries the phosphothreonine modification. 2 S-geranylgeranyl cysteine lipidation sites follow: Cys225 and Cys227. Cys227 bears the Cysteine methyl ester mark.

The protein belongs to the small GTPase superfamily. Rab family. In terms of assembly, interacts with RIMS1, RIMS2, RPH3A and RPH3AL. The GTP-bound form interacts with REP15. Interacts with GDI2, CHM and CHML; phosphorylation at Thr-86 disrupts these interactions. Interacts with MADD (via uDENN domain); the GTP-bound form is preferred for interaction. Mg(2+) serves as cofactor. Post-translationally, phosphorylation of Thr-86 in the switch II region by LRRK2 prevents the association of RAB regulatory proteins, including CHM, CHML and RAB GDP dissociation inhibitor GDI2.

It is found in the cell membrane. The catalysed reaction is GTP + H2O = GDP + phosphate + H(+). Regulated by guanine nucleotide exchange factors (GEFs) which promote the exchange of bound GDP for free GTP. Regulated by GTPase activating proteins (GAPs) which increase the GTP hydrolysis activity. Inhibited by GDP dissociation inhibitors (GDIs) which prevent Rab-GDP dissociation. In terms of biological role, the small GTPases Rab are key regulators of intracellular membrane trafficking, from the formation of transport vesicles to their fusion with membranes. Rabs cycle between an inactive GDP-bound form and an active GTP-bound form that is able to recruit to membranes different sets of downstream effectors directly responsible for vesicle formation, movement, tethering and fusion. This Bos taurus (Bovine) protein is Ras-related protein Rab-3C (RAB3C).